A 312-amino-acid polypeptide reads, in one-letter code: Protoheme IX farnesyltransferase 1 (312 aa).

The next 9 membrane-spanning stretches (helical) occupy residues 21–41, 53–73, 105–125, 127–147, 156–176, 182–202, 225–245, 246–266, and 292–312; these read GVLA…LLVT, IPSP…AGSA, SALV…ALGA, LLAA…YTLV, IVWG…AVTG, ALVM…SLAM, VSAR…LLVP, ATSW…LIVA, and LALL…SFVA.

The protein belongs to the UbiA prenyltransferase family. Protoheme IX farnesyltransferase subfamily.

It is found in the cell membrane. It catalyses the reaction heme b + (2E,6E)-farnesyl diphosphate + H2O = Fe(II)-heme o + diphosphate. It functions in the pathway porphyrin-containing compound metabolism; heme O biosynthesis; heme O from protoheme: step 1/1. Its function is as follows. Converts heme B (protoheme IX) to heme O by substitution of the vinyl group on carbon 2 of heme B porphyrin ring with a hydroxyethyl farnesyl side group. This chain is Protoheme IX farnesyltransferase 1, found in Saccharopolyspora erythraea (strain ATCC 11635 / DSM 40517 / JCM 4748 / NBRC 13426 / NCIMB 8594 / NRRL 2338).